Consider the following 158-residue polypeptide: Ribosome maturation factor RimP (158 aa).

This sequence belongs to the RimP family.

It is found in the cytoplasm. Its function is as follows. Required for maturation of 30S ribosomal subunits. This chain is Ribosome maturation factor RimP, found in Aquifex aeolicus (strain VF5).